Here is a 336-residue protein sequence, read N- to C-terminus: CASP-like protein UU1 (336 aa).

The Cytoplasmic portion of the chain corresponds to 1–170 (MGKGPGLDPS…PAMESNKDDN (170 aa)). Residues 171–191 (FFGAIVLSLRAAQIVFTVVGL) traverse the membrane as a helical segment. Topologically, residues 192 to 222 (GVMGSLKHTSHGDYYYYYYDFSFTQVDSYIG) are extracellular. A helical membrane pass occupies residues 223–243 (VLSLDVIVCLYAIVQLVLCFI). Residues 244–261 (QRSNQGKYLSSPTTVAAK) lie on the Cytoplasmic side of the membrane. A helical membrane pass occupies residues 262-282 (LTFVFDQVLAYALVATAGAAA). The Extracellular segment spans residues 283–307 (GSALEIRKGTSCSGTWTVICSKGEA). The chain crosses the membrane as a helical span at residues 308–328 (SVAMSFFAFAFLAATAAVYSV). At 329–336 (RLLRITGR) the chain is on the cytoplasmic side.

Belongs to the Casparian strip membrane proteins (CASP) family. As to quaternary structure, homodimer and heterodimers.

Its subcellular location is the cell membrane. In Physcomitrium patens (Spreading-leaved earth moss), this protein is CASP-like protein UU1.